Consider the following 399-residue polypeptide: Tryptophan synthase beta chain (399 aa).

An N6-(pyridoxal phosphate)lysine modification is found at lysine 92.

It belongs to the TrpB family. Tetramer of two alpha and two beta chains. Requires pyridoxal 5'-phosphate as cofactor.

It catalyses the reaction (1S,2R)-1-C-(indol-3-yl)glycerol 3-phosphate + L-serine = D-glyceraldehyde 3-phosphate + L-tryptophan + H2O. It participates in amino-acid biosynthesis; L-tryptophan biosynthesis; L-tryptophan from chorismate: step 5/5. The beta subunit is responsible for the synthesis of L-tryptophan from indole and L-serine. The polypeptide is Tryptophan synthase beta chain (Oceanobacillus iheyensis (strain DSM 14371 / CIP 107618 / JCM 11309 / KCTC 3954 / HTE831)).